A 3083-amino-acid polypeptide reads, in one-letter code: Laminin subunit alpha-1 (3083 aa).

Residues 1 to 24 form the signal peptide; sequence MRGSGTGAALLVLLASVLWVTVRS. At glutamine 25 the chain carries Pyrrolidone carboxylic acid. The Laminin N-terminal domain maps to 25–276; the sequence is QQRGLFPAIL…SIKDISVGGM (252 aa). Intrachain disulfides connect cysteine 277/cysteine 286, cysteine 279/cysteine 297, cysteine 299/cysteine 308, cysteine 311/cysteine 331, cysteine 334/cysteine 343, and cysteine 336/cysteine 368. Laminin EGF-like domains follow at residues 277 to 333, 334 to 403, 404 to 460, and 461 to 509; these read CICY…ECEE, CNCH…PCRP, CNCD…NCIP, and CDCR…GCSE. N-linked (GlcNAc...) asparagine glycosylation is present at asparagine 370. 10 disulfides stabilise this stretch: cysteine 371-cysteine 380, cysteine 383-cysteine 401, cysteine 404-cysteine 416, cysteine 406-cysteine 434, cysteine 436-cysteine 445, cysteine 448-cysteine 458, cysteine 461-cysteine 474, cysteine 463-cysteine 478, cysteine 480-cysteine 489, and cysteine 492-cysteine 507. In terms of domain architecture, Laminin EGF-like 5; first part spans 510-519; sequence CFCFGVSGVC. The Laminin IV type A 1 domain occupies 523–715; sequence TWSISQVTNM…DLAVAADVEH (193 aa). Asparagine 672 carries an N-linked (GlcNAc...) asparagine glycan. One can recognise a Laminin EGF-like 5; second part domain in the interval 716–748; it reads CECPQGYTGTSCEACLPGYYRVDGILFGGICQP. 32 disulfides stabilise this stretch: cysteine 749-cysteine 758, cysteine 751-cysteine 764, cysteine 767-cysteine 776, cysteine 779-cysteine 795, cysteine 798-cysteine 813, cysteine 800-cysteine 823, cysteine 826-cysteine 835, cysteine 838-cysteine 853, cysteine 856-cysteine 870, cysteine 858-cysteine 877, cysteine 880-cysteine 889, cysteine 892-cysteine 906, cysteine 909-cysteine 921, cysteine 911-cysteine 928, cysteine 930-cysteine 939, cysteine 942-cysteine 955, cysteine 958-cysteine 970, cysteine 960-cysteine 976, cysteine 978-cysteine 987, cysteine 990-cysteine 1002, cysteine 1005-cysteine 1014, cysteine 1007-cysteine 1021, cysteine 1023-cysteine 1032, cysteine 1035-cysteine 1048, cysteine 1051-cysteine 1063, cysteine 1053-cysteine 1070, cysteine 1072-cysteine 1081, cysteine 1084-cysteine 1094, cysteine 1097-cysteine 1109, cysteine 1099-cysteine 1125, cysteine 1127-cysteine 1136, and cysteine 1139-cysteine 1154. Laminin EGF-like domains are found at residues 749-797, 798-855, 856-908, 909-957, 958-1004, 1005-1050, 1051-1096, and 1097-1156; these read CECH…DCQP, CACP…TCVP, CNCS…NCRA, CDCH…GCVP, CNCS…GCTP, CDCA…GCQA, CNCS…DCVP, and CGCD…GCSP. The Cell attachment site signature appears at 1147–1149; sequence RGD. Positions 1157–1166 constitute a Laminin EGF-like 14; first part domain; sequence CFCFGLSQLC. Positions 1177–1368 constitute a Laminin IV type A 2 domain; the sequence is ITLASDQPLL…EGEAALLLEL (192 aa). N-linked (GlcNAc...) asparagine glycosylation occurs at asparagine 1344. Residues 1369-1409 form the Laminin EGF-like 14; second part domain; it reads CVCPPGTAGHSCQDCAPGYYREKLPESGGRGPRPLLAPCVP. Cystine bridges form between cysteine 1410–cysteine 1419, cysteine 1412–cysteine 1426, cysteine 1429–cysteine 1438, cysteine 1441–cysteine 1456, cysteine 1459–cysteine 1473, cysteine 1461–cysteine 1483, cysteine 1486–cysteine 1495, cysteine 1498–cysteine 1513, cysteine 1516–cysteine 1528, cysteine 1518–cysteine 1535, cysteine 1537–cysteine 1546, and cysteine 1549–cysteine 1560. Laminin EGF-like domains are found at residues 1410–1458, 1459–1515, and 1516–1562; these read CNCN…DCTP, CTCP…SCQT, and CDCN…DCVS. The tract at residues 1564 to 2123 is domain II and I; it reads DDDCVGPLLN…SRARKQVASI (560 aa). Residues 1617 to 1691 adopt a coiled-coil conformation; the sequence is AKKIRAEIQL…VATLNQTARK (75 aa). Residues asparagine 1659, asparagine 1686, asparagine 1718, asparagine 1725, asparagine 1763, and asparagine 1811 are each glycosylated (N-linked (GlcNAc...) asparagine). The stretch at 1723–1809 forms a coiled coil; the sequence is QQNATLELKA…QEKKLRVQEE (87 aa). Residues 1868 to 1901 are a coiled coil; sequence KRRARDLVHRAEQHASELQSRAGALDRDLENVRN. Asparagine 1935, asparagine 2026, asparagine 2045, and asparagine 2066 each carry an N-linked (GlcNAc...) asparagine glycan. Laminin G-like domains lie at 2124–2304, 2312–2488, 2493–2679, 2721–2893, and 2898–3078; these read KVAV…CNGC, DSSF…RKGC, IQSV…LDTC, AHQF…VDRC, and QEGT…PHSC. Cysteine 2278 and cysteine 2304 form a disulfide bridge. Residue asparagine 2355 is glycosylated (N-linked (GlcNAc...) asparagine). 2 disulfides stabilise this stretch: cysteine 2464–cysteine 2488 and cysteine 2652–cysteine 2679. Asparagine 2834 carries N-linked (GlcNAc...) asparagine glycosylation. Residues cysteine 2868 and cysteine 2893 are joined by a disulfide bond. Asparagine 2923 carries an N-linked (GlcNAc...) asparagine glycan. An intrachain disulfide couples cysteine 3047 to cysteine 3078.

Laminin is a complex glycoprotein, consisting of three different polypeptide chains (alpha, beta, gamma), which are bound to each other by disulfide bonds into a cross-shaped molecule comprising one long and three short arms with globules at each end. Alpha-1 is a subunit of laminin-1 (laminin-111 or EHS laminin) and laminin-3 (laminin-121 or S-laminin). Tyrosine phosphorylated by PKDCC/VLK.

The protein resides in the secreted. It is found in the extracellular space. Its subcellular location is the extracellular matrix. It localises to the basement membrane. In terms of biological role, binding to cells via a high affinity receptor, laminin is thought to mediate the attachment, migration and organization of cells into tissues during embryonic development by interacting with other extracellular matrix components. The chain is Laminin subunit alpha-1 (Lama1) from Mus musculus (Mouse).